The chain runs to 1118 residues: MNSQQSTRTKQMLQQSSTHLLCGVVLLQLFAAQVDAQRSTSPWQTLSGDAPLVIARGGFSGLFPDSSLAAYQFAMVVSVADVVLWCDVQLTKDGHGICFPDLNLANASNSEEVYPNRQKSYPVNGVTTKGWFPIDFSLTELQKVLFSLIRGILSRSGKFDENGYSISTVQNVATQMKPALFWLNVQHDEFYEQHNLSMSSFLLSTSRTVSIDFISSPEVNFFRKIAGGFGNNGPSFVFQFMGKEDFEPTTNRTYGSILSNLSFVKTFASGILVPKSYILPLDDKQYLLPHTSLVQDAHKAGLKLYASGFANDVDIAYNYSWDPVSEYLSFVDNGNFSVDGMLSDFPLTASASVDCFSHIGRNATKQVDFLVISKNGASGEYPGCTKLAYEKAIKDGSDVIDCPVQMSSDGIPFCSSSIDLVNSTTVGQTHLRNRSIIVPEISSVAGIFTFSLTWHEIQSLTPAISNPFRENGMSRNPNERNSGNLISLYEFLNLAKNSTSLSGILISLENVVYLREKKGLDVVKVVLNRLTETGYIVGTLKVMIQSTTRLVLVDFKNQSTYKTVYKIKETIGNITDSAIEDIKKFANAVVINKASVFPNSDSFLTGQTTNVLERLQKFQLPVYVELFQNEFVSQPFDFFADETVEINAYIFGAGINGTITEFPYTAARYKRNRCLGREEVPPYMLPVNPGGVLTLISTSSLPPAQDPNPIFTHDDVTEPPLPPVIAKSPTSTLGTPSTIAKPLRNFLKVIRIVSWSVAGVVLFLVLLTLVFCFHRKRETRLRQQKLKALIPLEHYTYAQVKRITKSFAEVVGRGGFGIVYKGTLSDGRVVAVKVLKDTKGNGEDFINEVATMSRTSHLNIVSLLGFCSEGSKRAIIYEFLENGSLDKFILGKTSVNMDWTALYRIALGVAHGLEYLHHSCKTRIVHFDIKPQNVLLDDSFCPKVSDFGLAKLCEKKESILSMLDTRGTIGYIAPEMISRVYGNVSHKSDVYSYGMLVLEIIGARNKEKANQACASNTSSMYFPEWVYRDLESCKSGRHIEDGINSEEDELAKKMTLVGLWCIQPSPVDRPAMNRVVEMMEGSLEALEVPPRPVLQQIPISNLHESSILSEDVSVYTEG.

The N-terminal stretch at 1–35 (MNSQQSTRTKQMLQQSSTHLLCGVVLLQLFAAQVD) is a signal peptide. Topologically, residues 36–751 (AQRSTSPWQT…PLRNFLKVIR (716 aa)) are extracellular. In terms of domain architecture, GP-PDE 1 spans 51 to 353 (PLVIARGGFS…DFPLTASASV (303 aa)). 13 N-linked (GlcNAc...) asparagine glycosylation sites follow: Asn-106, Asn-195, Asn-251, Asn-260, Asn-318, Asn-335, Asn-362, Asn-422, Asn-433, Asn-497, Asn-557, Asn-573, and Asn-656. Residues 369 to 670 (FLVISKNGAS…EFPYTAARYK (302 aa)) enclose the GP-PDE 2 domain. Residues 752–772 (IVSWSVAGVVLFLVLLTLVFC) traverse the membrane as a helical segment. Residues 773–1118 (FHRKRETRLR…SEDVSVYTEG (346 aa)) are Cytoplasmic-facing. Residues 805–1094 (KSFAEVVGRG…ALEVPPRPVL (290 aa)) enclose the Protein kinase domain. ATP is bound by residues 811 to 819 (VGRGGFGIV) and Lys-833. Asp-928 serves as the catalytic Proton acceptor.

The protein in the N-terminal section; belongs to the glycerophosphoryl diester phosphodiesterase family. In the C-terminal section; belongs to the protein kinase superfamily. Ser/Thr protein kinase family. Expressed in shoots, rosette and cauline leaves, stems, flowers and siliques.

It localises to the cell membrane. It carries out the reaction a sn-glycero-3-phosphodiester + H2O = an alcohol + sn-glycerol 3-phosphate + H(+). It catalyses the reaction L-seryl-[protein] + ATP = O-phospho-L-seryl-[protein] + ADP + H(+). The catalysed reaction is L-threonyl-[protein] + ATP = O-phospho-L-threonyl-[protein] + ADP + H(+). In terms of biological role, atypical receptor-like kinase involved in disease resistance. In Arabidopsis thaliana (Mouse-ear cress), this protein is Protein SUPPRESSOR OF NPR1-1 CONSTITUTIVE 4.